The chain runs to 496 residues: Autophagy-related protein 21 (496 aa).

The WD 1 repeat unit spans residues 1–35 (MKVLQFNQDATCCVVAASSHQISIFNCDPFGKCFE). The segment at 41–86 (SKKKTSNNNGTASNSESRNNEESILITNGSRDRTDAEEEEDNEDNA) is disordered. The segment covering 46–57 (SNNNGTASNSES) has biased composition (low complexity). Residues 75 to 84 (DAEEEEDNED) are compositionally biased toward acidic residues. One copy of the WD 2 repeat lies at 148–190 (VMNRKRMCVLLESDQIFIYDISCMKPLETIDLWEDHYKRSQAN). The residue at position 213 (threonine 213) is a Phosphothreonine. Serine 237 carries the post-translational modification Phosphoserine. 3 WD repeats span residues 294-334 (VHKG…DYMS), 346-385 (TRLC…NSLP), and 448-488 (VNES…GECV). Residues 342-346 (FRRGT) carry the L/FRRG motif motif.

Belongs to the WD repeat PROPPIN family.

It localises to the cytoplasm. The protein localises to the vacuole membrane. Its function is as follows. Required for cytoplasm to vacuole transport (Cvt) vesicles formation and mitophagy. Involved in binding of phosphatidylethanolamine to ATG8 and in recruitment of ATG8 and ATG5 to the pre-autophagosomal structure. Protects ATG8 from ARG4-mediated cleavage. Essential for maturation of proaminopeptidase I. The chain is Autophagy-related protein 21 (ATG21) from Saccharomyces cerevisiae (strain YJM789) (Baker's yeast).